Consider the following 396-residue polypeptide: Obg-like ATPase 1 (396 aa).

An OBG-type G domain is found at 23–283 (LKIGIVGLPN…LSAEERQKYL (261 aa)). An ATP-binding site is contributed by 32 to 37 (NVGKST). Positions 36 and 56 each coordinate Mg(2+). ATP is bound at residue L231. Residues 267 to 274 (LELKLQEL) carry the Nuclear export signal motif. K294 is modified (N6-acetyllysine). A TGS domain is found at 304–387 (QLEYFFTAGP…EDGDIIFFKF (84 aa)).

Belongs to the TRAFAC class OBG-HflX-like GTPase superfamily. OBG GTPase family. YchF/OLA1 subfamily. Monomer. Requires Mg(2+) as cofactor.

It is found in the cytoplasm. It localises to the nucleus. The protein resides in the nucleolus. In terms of biological role, hydrolyzes ATP, and can also hydrolyze GTP with lower efficiency. Has lower affinity for GTP. The protein is Obg-like ATPase 1 of Pongo abelii (Sumatran orangutan).